Consider the following 72-residue polypeptide: Gas vesicle protein A (72 aa).

It belongs to the gas vesicle GvpA family. The gas vesicle shell is 2 nm thick and consists of a single layer of this protein. It forms helical ribs nearly perpendicular to the long axis of the vesicle.

It is found in the gas vesicle shell. Functionally, gas vesicles are hollow, gas filled proteinaceous nanostructures found in some microorganisms. During planktonic growth they allow positioning of the organism at a favorable depth for light or nutrient acquisition. GvpA forms the protein shell. This chain is Gas vesicle protein A, found in Geotalea uraniireducens (strain Rf4) (Geobacter uraniireducens).